The primary structure comprises 114 residues: NADH-quinone oxidoreductase subunit K 2 (114 aa).

The next 3 membrane-spanning stretches (helical) occupy residues 1 to 21 (MIVPFGHVLLLAGALFGLGVF), 29 to 49 (LIMIVLGVEIMLNAASIAFIG), and 62 to 82 (FVLFILAVAATEVSIGLAIIV).

It belongs to the complex I subunit 4L family. NDH-1 is composed of 14 different subunits. Subunits NuoA, H, J, K, L, M, N constitute the membrane sector of the complex.

The protein resides in the cell inner membrane. The catalysed reaction is a quinone + NADH + 5 H(+)(in) = a quinol + NAD(+) + 4 H(+)(out). NDH-1 shuttles electrons from NADH, via FMN and iron-sulfur (Fe-S) centers, to quinones in the respiratory chain. The immediate electron acceptor for the enzyme in this species is believed to be ubiquinone. Couples the redox reaction to proton translocation (for every two electrons transferred, four hydrogen ions are translocated across the cytoplasmic membrane), and thus conserves the redox energy in a proton gradient. This Syntrophobacter fumaroxidans (strain DSM 10017 / MPOB) protein is NADH-quinone oxidoreductase subunit K 2.